Reading from the N-terminus, the 149-residue chain is Small ribosomal subunit protein uS19 (149 aa).

This sequence belongs to the universal ribosomal protein uS19 family.

Protein S19 forms a complex with S13 that binds strongly to the 16S ribosomal RNA. The chain is Small ribosomal subunit protein uS19 from Methanopyrus kandleri (strain AV19 / DSM 6324 / JCM 9639 / NBRC 100938).